Reading from the N-terminus, the 1128-residue chain is Nck-associated protein 1 (1128 aa).

N-acetylserine is present on S2. Residues 640-665 (AVNKKSKKQTGKKGEPEREKPGVESM) form a disordered region. Positions 651-665 (KKGEPEREKPGVESM) are enriched in basic and acidic residues. The helical transmembrane segment at 995–1015 (IACLLMVFVAVSLPTLASNVM) threads the bilayer.

It belongs to the HEM-1/HEM-2 family. As to quaternary structure, component of the WAVE1 complex composed of ABI2, CYFIP1 or CYFIP2, BRK1, NCKAP1 and WASF1/WAVE1. Within the complex, a heterodimer containing NCKAP1 and CYFIP1 interacts with a heterotrimer formed by WAVE1, ABI2 and BRK1. Component of the WAVE2 complex composed of ABI1, CYFIP1/SRA1, NCKAP1/NAP1 and WASF2/WAVE2. CYFIP2 binds to activated RAC1 which causes the complex to dissociate, releasing activated WASF1. The complex can also be activated by NCK1. Associates preferentially with the first SH3 domain of NCK. Interacts with NYAP1, NYAP2 and MYO16. Interacts with TMEM132D. In terms of assembly, (Microbial infection) Interacts with human cytomegalovirus protein UL135. Expressed in all tissues examined except peripheral blood leukocytes, with highest expression in brain, heart, and skeletal muscle. Expressed in cells of various brain regions including Purkinje cells and dentate nucleus of the cerebellum, CA4 region and dentate gyrus of the hippocampus, and in frontal gray and white matter.

The protein localises to the cell membrane. It is found in the cell projection. It localises to the lamellipodium membrane. In terms of biological role, part of the WAVE complex that regulates lamellipodia formation. The WAVE complex regulates actin filament reorganization via its interaction with the Arp2/3 complex. Actin remodeling activity is regulated by RAC1. As component of the WAVE1 complex, required for BDNF-NTRK2 endocytic trafficking and signaling from early endosomes. This Homo sapiens (Human) protein is Nck-associated protein 1 (NCKAP1).